The primary structure comprises 98 residues: Signal peptidase complex subunit 1 (98 aa).

At Met-1–Arg-18 the chain is on the cytoplasmic side. The chain crosses the membrane as a helical span at residues Trp-19 to Val-38. Over Gln-39 to Ser-42 the chain is Lumenal. A helical membrane pass occupies residues Gln-43 to Leu-65. At Tyr-66–Gln-98 the chain is on the cytoplasmic side. The interval Asp-78 to Gln-98 is disordered. 4 positions are modified to phosphoserine: Ser-84, Ser-85, Ser-86, and Ser-88.

Belongs to the SPCS1 family. Component of the signal peptidase complex (SPC) composed of a catalytic subunit twr/SEC11 and three accessory subunits Spase12/SPCS1, Spase25/SPCS2 and Spase22-23/SPCS3. The complex induces a local thinning of the ER membrane which is used to measure the length of the signal peptide (SP) h-region of protein substrates. This ensures the selectivity of the complex towards h-regions shorter than 18-20 amino acids.

The protein localises to the endoplasmic reticulum membrane. Functionally, component of the signal peptidase complex (SPC) which catalyzes the cleavage of N-terminal signal sequences from nascent proteins as they are translocated into the lumen of the endoplasmic reticulum. Dispensable for SPC enzymatic activity. Its function is as follows. (Microbial infection) Plays an important role in infection by flaviviruses such as West Nile virus and Dengue virus type 2. This is Signal peptidase complex subunit 1 (Spase12) from Drosophila melanogaster (Fruit fly).